A 1303-amino-acid chain; its full sequence is Alpha,alpha-trehalose-phosphate synthase [UDP-forming] 2 (1303 aa).

2 disordered regions span residues 1-48 (MTVV…NNTT) and 205-251 (LQRR…FRGK). Residues 212–221 (SSRGGSLRGS) are compositionally biased toward low complexity.

This sequence in the N-terminal section; belongs to the glycosyltransferase 20 family. The protein in the C-terminal section; belongs to the gob-1 trehalose phosphatase family.

It carries out the reaction D-glucose 6-phosphate + UDP-alpha-D-glucose = alpha,alpha-trehalose 6-phosphate + UDP + H(+). In terms of biological role, catalyzes the production of trehalose from glucose-6-phosphate and UDP-alpha-D-glucose in a 2 step process. The sequence is that of Alpha,alpha-trehalose-phosphate synthase [UDP-forming] 2 (tps-2) from Aphelenchoides avenae (Mycophagous nematode worm).